The sequence spans 326 residues: Eukaryotic translation initiation factor 3 subunit I (326 aa).

WD repeat units follow at residues 8–47 (GHER…RLGT), 50–89 (GHQG…VIAS), 145–184 (MTES…KVVD), 188–227 (DHSA…CLKT), and 285–326 (GHFG…NIFE).

This sequence belongs to the eIF-3 subunit I family. In terms of assembly, component of the eukaryotic translation initiation factor 3 (eIF-3) complex. The eIF-3 complex interacts with pix.

The protein resides in the cytoplasm. Its function is as follows. Component of the eukaryotic translation initiation factor 3 (eIF-3) complex, which is involved in protein synthesis of a specialized repertoire of mRNAs and, together with other initiation factors, stimulates binding of mRNA and methionyl-tRNAi to the 40S ribosome. The eIF-3 complex specifically targets and initiates translation of a subset of mRNAs involved in cell proliferation. The sequence is that of Eukaryotic translation initiation factor 3 subunit I from Drosophila sechellia (Fruit fly).